We begin with the raw amino-acid sequence, 391 residues long: NAD(P)H-quinone oxidoreductase subunit H, chloroplastic (391 aa).

Belongs to the complex I 49 kDa subunit family. In terms of assembly, NDH is composed of at least 16 different subunits, 5 of which are encoded in the nucleus.

Its subcellular location is the plastid. The protein localises to the chloroplast thylakoid membrane. The catalysed reaction is a plastoquinone + NADH + (n+1) H(+)(in) = a plastoquinol + NAD(+) + n H(+)(out). It catalyses the reaction a plastoquinone + NADPH + (n+1) H(+)(in) = a plastoquinol + NADP(+) + n H(+)(out). In terms of biological role, NDH shuttles electrons from NAD(P)H:plastoquinone, via FMN and iron-sulfur (Fe-S) centers, to quinones in the photosynthetic chain and possibly in a chloroplast respiratory chain. The immediate electron acceptor for the enzyme in this species is believed to be plastoquinone. Couples the redox reaction to proton translocation, and thus conserves the redox energy in a proton gradient. The sequence is that of NAD(P)H-quinone oxidoreductase subunit H, chloroplastic from Mesostigma viride (Green alga).